We begin with the raw amino-acid sequence, 80 residues long: Small, acid-soluble spore protein Tlp (80 aa).

The segment covering 34–73 has biased composition (basic and acidic residues); that stretch reads AKESMEFATDEEKQRIQEKNARRNESIESFRSEIQDESAA. The interval 34–80 is disordered; it reads AKESMEFATDEEKQRIQEKNARRNESIESFRSEIQDESAARENGYQS.

It belongs to the Tlp family.

The protein resides in the spore core. This chain is Small, acid-soluble spore protein Tlp, found in Bacillus velezensis (strain DSM 23117 / BGSC 10A6 / LMG 26770 / FZB42) (Bacillus amyloliquefaciens subsp. plantarum).